A 532-amino-acid chain; its full sequence is Cytochrome P450 12b1, mitochondrial (532 aa).

Cys-480 is a binding site for heme.

Belongs to the cytochrome P450 family. It depends on heme as a cofactor.

The protein resides in the mitochondrion. Probably involved in steroid hormones biosynthesis. The polypeptide is Cytochrome P450 12b1, mitochondrial (Cyp12b1) (Drosophila acanthoptera (Fruit fly)).